Consider the following 454-residue polypeptide: Bifunctional protein GlmU (454 aa).

Positions 1 to 226 are pyrophosphorylase; the sequence is MALNVVILAA…AIEVEGANNR (226 aa). UDP-N-acetyl-alpha-D-glucosamine contacts are provided by residues 8 to 11, lysine 22, glutamine 73, 78 to 79, 100 to 102, glycine 137, glutamate 151, asparagine 166, and asparagine 224; these read LAAG, GT, and YGD. Aspartate 102 lines the Mg(2+) pocket. Residue asparagine 224 participates in Mg(2+) binding. The interval 227 to 247 is linker; it reads VQLAQLERAYQAREAEKLMIA. The tract at residues 248–454 is N-acetyltransferase; that stretch reads GANLRDPSRI…GWQRPVKIKK (207 aa). Residues arginine 330 and lysine 348 each coordinate UDP-N-acetyl-alpha-D-glucosamine. The active-site Proton acceptor is histidine 360. Residues tyrosine 363 and asparagine 374 each contribute to the UDP-N-acetyl-alpha-D-glucosamine site. Acetyl-CoA is bound by residues alanine 377, 383 to 384, serine 402, alanine 420, and arginine 437; that span reads NY.

The protein in the N-terminal section; belongs to the N-acetylglucosamine-1-phosphate uridyltransferase family. It in the C-terminal section; belongs to the transferase hexapeptide repeat family. In terms of assembly, homotrimer. Mg(2+) serves as cofactor.

The protein resides in the cytoplasm. It catalyses the reaction alpha-D-glucosamine 1-phosphate + acetyl-CoA = N-acetyl-alpha-D-glucosamine 1-phosphate + CoA + H(+). The catalysed reaction is N-acetyl-alpha-D-glucosamine 1-phosphate + UTP + H(+) = UDP-N-acetyl-alpha-D-glucosamine + diphosphate. It functions in the pathway nucleotide-sugar biosynthesis; UDP-N-acetyl-alpha-D-glucosamine biosynthesis; N-acetyl-alpha-D-glucosamine 1-phosphate from alpha-D-glucosamine 6-phosphate (route II): step 2/2. The protein operates within nucleotide-sugar biosynthesis; UDP-N-acetyl-alpha-D-glucosamine biosynthesis; UDP-N-acetyl-alpha-D-glucosamine from N-acetyl-alpha-D-glucosamine 1-phosphate: step 1/1. Its pathway is bacterial outer membrane biogenesis; LPS lipid A biosynthesis. Functionally, catalyzes the last two sequential reactions in the de novo biosynthetic pathway for UDP-N-acetylglucosamine (UDP-GlcNAc). The C-terminal domain catalyzes the transfer of acetyl group from acetyl coenzyme A to glucosamine-1-phosphate (GlcN-1-P) to produce N-acetylglucosamine-1-phosphate (GlcNAc-1-P), which is converted into UDP-GlcNAc by the transfer of uridine 5-monophosphate (from uridine 5-triphosphate), a reaction catalyzed by the N-terminal domain. The protein is Bifunctional protein GlmU of Shewanella oneidensis (strain ATCC 700550 / JCM 31522 / CIP 106686 / LMG 19005 / NCIMB 14063 / MR-1).